The following is a 132-amino-acid chain: Small ribosomal subunit protein uS8 (132 aa).

The protein belongs to the universal ribosomal protein uS8 family. Part of the 30S ribosomal subunit. Contacts proteins S5 and S12.

Its function is as follows. One of the primary rRNA binding proteins, it binds directly to 16S rRNA central domain where it helps coordinate assembly of the platform of the 30S subunit. This is Small ribosomal subunit protein uS8 from Micrococcus luteus (strain ATCC 4698 / DSM 20030 / JCM 1464 / CCM 169 / CCUG 5858 / IAM 1056 / NBRC 3333 / NCIMB 9278 / NCTC 2665 / VKM Ac-2230) (Micrococcus lysodeikticus).